A 65-amino-acid polypeptide reads, in one-letter code: Large ribosomal subunit protein bL35 (65 aa).

The protein belongs to the bacterial ribosomal protein bL35 family.

The protein is Large ribosomal subunit protein bL35 of Heliobacterium modesticaldum (strain ATCC 51547 / Ice1).